We begin with the raw amino-acid sequence, 159 residues long: Ribosomal RNA large subunit methyltransferase H (159 aa).

S-adenosyl-L-methionine contacts are provided by residues leucine 76, glycine 108, and 127 to 132 (FGRMTL).

This sequence belongs to the RNA methyltransferase RlmH family. As to quaternary structure, homodimer.

It localises to the cytoplasm. It catalyses the reaction pseudouridine(1915) in 23S rRNA + S-adenosyl-L-methionine = N(3)-methylpseudouridine(1915) in 23S rRNA + S-adenosyl-L-homocysteine + H(+). Functionally, specifically methylates the pseudouridine at position 1915 (m3Psi1915) in 23S rRNA. The chain is Ribosomal RNA large subunit methyltransferase H from Lactococcus lactis subsp. cremoris (strain SK11).